Consider the following 834-residue polypeptide: Sodium/hydrogen exchanger 3 (834 aa).

Residues 1–25 form the signal peptide; sequence MWGLGARGPDRGLLLALALGGLARA. Over 26–51 the chain is Extracellular; sequence GGVEVEPGGAHGESGGFQVVTFEWAH. A helical membrane pass occupies residues 52–74; it reads VQDPYVIALWILVASLAKIGFHL. The Cytoplasmic segment spans residues 75–82; it reads SHKVTSVV. A helical membrane pass occupies residues 83–102; it reads PESALLIVLGLVLGGIVWAA. The Extracellular segment spans residues 103-111; that stretch reads DHIASFTLT. A helical transmembrane segment spans residues 112 to 129; that stretch reads PTVFFFYLLPPIVLDAGY. Residues 130-132 lie on the Cytoplasmic side of the membrane; the sequence is FMP. The chain crosses the membrane as a helical span at residues 133–168; sequence NRLFFGNLGTILLYAVVGTVWNAATTGLSLYGVFLS. A 1,2-diacyl-sn-glycero-3-phospho-(1D-myo-inositol) contacts are provided by Gly138, Gly141, and Thr142. At 169-181 the chain is on the extracellular side; sequence GLMGDLQIGLLDF. The chain crosses the membrane as a helical span at residues 182-203; the sequence is LLFGSLMAAVDPVAVLAVFEEV. Residues 204–205 lie on the Cytoplasmic side of the membrane; the sequence is HV. A helical membrane pass occupies residues 206–237; sequence NEVLFIIVFGESLLNDAVTVVLYNVFESFVAL. At 238–244 the chain is on the extracellular side; that stretch reads GGDNVTG. Asn241 is a glycosylation site (N-linked (GlcNAc...) asparagine). A helical membrane pass occupies residues 245-279; sequence VDCVKGIVSFFVVSLGGTLVGVVFAFLLSLVTRFT. Residues 280–281 lie on the Cytoplasmic side of the membrane; sequence KH. The helical transmembrane segment at 282–304 threads the bilayer; it reads VRIIEPGFVFIISYLSYLTSEML. At 305 to 306 the chain is on the extracellular side; the sequence is SL. Residues 307 to 323 form a helical membrane-spanning segment; it reads SAILAITFCGICCQKYV. The Cytoplasmic portion of the chain corresponds to 324–330; it reads KANISEQ. Residues 331-359 traverse the membrane as a helical segment; that stretch reads SATTVRYTMKMLASSAETIIFMFLGISAV. The Extracellular portion of the chain corresponds to 360–367; that stretch reads NPFIWTWN. Residues 368 to 389 form a helical membrane-spanning segment; the sequence is TAFVLLTLVFISVYRAIGVVLQ. Residues 390 to 402 lie on the Cytoplasmic side of the membrane; that stretch reads TWLLNRYRMVQLE. Met398 contacts a 1,2-diacyl-sn-glycero-3-phospho-(1D-myo-inositol). Residues 403–426 form a helical membrane-spanning segment; the sequence is PIDQVVLSYGGLRGAVAFALVVLL. At 427–433 the chain is on the extracellular side; that stretch reads DGDKVKE. The chain crosses the membrane as a helical span at residues 434–467; sequence KNLFVSTTIIVVFFTVIFQGLTIKPLVQWLKVKR. The Cytoplasmic portion of the chain corresponds to 468-834; sequence SEHREPRLNE…PAALPESTHM (367 aa). Gln497, Ile498, and His500 together coordinate a 1,2-diacyl-sn-glycero-3-phospho-(1D-myo-inositol). Phosphoserine is present on residues Ser555 and Ser563. The tract at residues 575–589 is interaction with EZR; sequence RSSTVEASVSYLLRE. An interaction with NHERF4 region spans residues 590–667; it reads NVSAVCLDMQ…RKRLESFKST (78 aa). An interaction with AHCYL1 region spans residues 591–695; that stretch reads VSAVCLDMQS…AQKRRNSSIP (105 aa). A phosphoserine mark is found at Ser592 and Ser607. Position 663 is a phosphoserine; by SGK1 (Ser663). The segment covering 679 to 691 has biased composition (basic residues); it reads KLYKRERAQKRRN. Residues 679-728 are disordered; sequence KLYKRERAQKRRNSSIPNGKLPMESPAQNFTIKEKDLELSDTEEPPNYDE. Residues 717 to 728 are compositionally biased toward acidic residues; sequence LSDTEEPPNYDE. 3 positions are modified to phosphoserine: Ser718, Ser810, and Ser813. Positions 814-834 are disordered; the sequence is FLQADGPEERPPAALPESTHM.

The protein belongs to the monovalent cation:proton antiporter 1 (CPA1) transporter (TC 2.A.36) family. Homodimer. Found in the forms of complex and dynamic macromolecular complexes. Binds NHERF1 and NHERF2. Interacts with CHP1; increases SLC9A3 trafficking and activity at the plasma membrane. Interacts with CHP2 and SHANK2. Interacts with PDZK1 (via C-terminal PDZ domain). Interacts with NHERF4 and interaction decrease in response to elevated calcium ion levels. Interacts with AHCYL1; the interaction is required for SLC9A3 activity. Interacts with SNX27 (via PDZ domains); directs SLC9A3 membrane insertion from early endosomes to the plasma membrane. Interacts with EZR; interaction targets SLC9A3 to the apical membrane. Post-translationally, phosphorylated by PKA, which inhibits activity. Phosphorylation at Ser-663 by SGK1 is associated with increased abundance at the cell membrane. Phosphorylation at Ser-718 by CSNK2A1 regulates SLC9A3 activity through the formation of multiple signaling complexes.

It is found in the apical cell membrane. The protein resides in the cell membrane. Its subcellular location is the recycling endosome membrane. The protein localises to the early endosome membrane. The catalysed reaction is Na(+)(in) + H(+)(out) = Na(+)(out) + H(+)(in). Its activity is regulated as follows. Seems to switch between active and inactive modes in response to various stimuli. Activated directly or indirectly by membrane phosphatidylinositol (PIs). Regulated by a variety of auxiliary proteins, which facilitate the maturation, cell surface expression and function of the transporter. Inhibited specifically by the drug tenapanor. In terms of biological role, plasma membrane Na(+)/H(+) antiporter. Exchanges intracellular H(+) ions for extracellular Na(+) in 1:1 stoichiometry, playing a key role in salt and fluid absorption and pH homeostasis. Major apical Na(+)/H(+) exchanger in kidney and intestine playing an important role in renal and intestine Na(+) absorption and blood pressure regulation. This chain is Sodium/hydrogen exchanger 3, found in Homo sapiens (Human).